Here is a 1822-residue protein sequence, read N- to C-terminus: Integrin beta-4 (1822 aa).

The signal sequence occupies residues 1-27 (MAGPRPSPWARLLLAALISVSLSGTLA). Over 28-710 (NRCKKAPVKS…HKKKDCPPGS (683 aa)) the chain is Extracellular. Residues 29 to 73 (RCKKAPVKSCTECVRVDKDCAYCTDEMFRDRRCNTQAELLAAGCQ) form the PSI domain. 8 disulfides stabilise this stretch: cysteine 30/cysteine 48, cysteine 38/cysteine 455, cysteine 41/cysteine 61, cysteine 51/cysteine 72, cysteine 245/cysteine 288, cysteine 457/cysteine 476, cysteine 468/cysteine 479, and cysteine 481/cysteine 490. Residues 131–329 (DLYILMDFSN…IPIFAVTNYS (199 aa)) enclose the VWFA domain. Serine 139 and serine 141 together coordinate Mg(2+). Serine 141, aspartate 144, aspartate 145, and aspartate 176 together coordinate Ca(2+). Residues 194–199 (WPNSDP) are involved in NRG1- and IGF1-binding. Residues asparagine 228, aspartate 230, proline 232, and glutamate 233 each coordinate Ca(2+). Residue glutamate 233 participates in Mg(2+) binding. Residue asparagine 327 is glycosylated (N-linked (GlcNAc...) asparagine). Residue glutamate 350 coordinates Ca(2+). I-EGF domains are found at residues 457–491 (CELQ…QTCN), 492–537 (CSTG…QFCE), 538–574 (YDNF…PSCD), and 575–615 (CPLS…TICE). Asparagine 491 carries an N-linked (GlcNAc...) asparagine glycan. Intrachain disulfides connect cysteine 492/cysteine 520, cysteine 503/cysteine 518, cysteine 512/cysteine 523, cysteine 525/cysteine 536, cysteine 543/cysteine 557, cysteine 551/cysteine 562, cysteine 564/cysteine 573, cysteine 575/cysteine 598, cysteine 582/cysteine 596, cysteine 590/cysteine 601, and cysteine 603/cysteine 614. A glycan (N-linked (GlcNAc...) asparagine) is linked at asparagine 579. Asparagine 617 carries N-linked (GlcNAc...) asparagine glycosylation. 4 disulfide bridges follow: cysteine 626/cysteine 671, cysteine 632/cysteine 651, cysteine 635/cysteine 648, and cysteine 680/cysteine 706. N-linked (GlcNAc...) asparagine glycosylation is present at asparagine 695. The helical transmembrane segment at 711–733 (FWWLIPLLLLLLPLLALLLLLCW) threads the bilayer. The interval 732–749 (CWKYCACCKACLALLPCC) is palmitoylated on several cysteines. At 734–1822 (KYCACCKACL…THMDQQFFQT (1089 aa)) the chain is on the cytoplasmic side. A phosphoserine mark is found at serine 771, serine 1069, and serine 1119. The region spanning 979 to 1084 (VNITIIKEQA…QVRRFHVQLS (106 aa)) is the Calx-beta domain. Positions 1113–1140 (TSQMLSSQPPPHGDLGAPQNPNAKAAGS) are disordered. 2 consecutive Fibronectin type-III domains span residues 1129 to 1218 (APQN…THQE) and 1222 to 1321 (EPGR…TQPK). The segment at 1400-1444 (LSASSGRSSDAEAPHGPPDDGGAGGKGGSLPRSATPGPPGEHLVN) is disordered. Positions 1418-1427 (DDGGAGGKGG) are enriched in gly residues. Residues serine 1454, serine 1457, and serine 1474 each carry the phosphoserine modification. At threonine 1487 the chain carries Phosphothreonine. At serine 1494 the chain carries Phosphoserine. A disordered region spans residues 1495-1525 (LTRSEHSHSTTLPRDYSTLTSVSSHDSRLTA). Over residues 1503 to 1518 (STTLPRDYSTLTSVSS) the composition is skewed to polar residues. Threonine 1530 is modified (phosphothreonine). 2 consecutive Fibronectin type-III domains span residues 1530 to 1625 (TPTR…VHPQ) and 1643 to 1739 (APGP…SQDG). Phosphoserine is present on serine 1791.

This sequence belongs to the integrin beta chain family. As to quaternary structure, heterodimer of an alpha and a beta subunit. Beta-4 associates with alpha-6. Interacts (via cytoplasmic region) with COL17A1 (via cytoplasmic region). Interacts (via cytoplasmic region) with DST isoform 3 (via N-terminus). Isoform beta-4a interacts (via cytoplasmic domain) with DST (via N-terminus). Interacts with RAC1. ITGA6:ITGB4 is found in a ternary complex with NRG1 and ERBB3. ITGA6:ITGB4 is found in a ternary complex with IGF1 and IGF1R. ITGA6:ITGB4 interacts with IGF2. Interacts with TMEM268; this interaction prevents ITGB4 degradation. Palmitoylated by DHHC3 at several cysteines of the membrane-proximal region, enhancing stability and cell surface expression. Palmitoylation also promotes secondary association with tertaspanins. As to expression, integrin alpha-6/beta-4 is predominantly expressed by epithelia. Isoform beta-4D is also expressed in colon and placenta. Isoform beta-4E is also expressed in epidermis, lung, duodenum, heart, spleen and stomach.

Its subcellular location is the cell membrane. It localises to the cell junction. The protein resides in the hemidesmosome. Its function is as follows. Integrin alpha-6/beta-4 is a receptor for laminin. Plays a critical structural role in the hemidesmosome of epithelial cells. Is required for the regulation of keratinocyte polarity and motility. ITGA6:ITGB4 binds to NRG1 (via EGF domain) and this binding is essential for NRG1-ERBB signaling. ITGA6:ITGB4 binds to IGF1 and this binding is essential for IGF1 signaling. ITGA6:ITGB4 binds to IGF2 and this binding is essential for IGF2 signaling. The chain is Integrin beta-4 (ITGB4) from Homo sapiens (Human).